The primary structure comprises 201 residues: Female-specific protein transformer (201 aa).

The interval 1–117 (MDADSSSRSP…RSRSRSRTPR (117 aa)) is disordered. Residues 9–37 (SPRDTRTCARPKEKVPYFADEGRERDRVR) are compositionally biased toward basic and acidic residues. 2 stretches are compositionally biased toward basic residues: residues 38 to 62 (NLRH…RARS) and 99 to 115 (KQRR…RSRT).

Its subcellular location is the nucleus speckle. Its function is as follows. Member of the regulatory pathway controlling female somatic sexual differentiation, regulated by Sxl. Activates dsx female-specific splicing by promoting the formation of a splicing enhancer complex which consists of tra, tra2 and sr proteins. The polypeptide is Female-specific protein transformer (tra) (Drosophila hydei (Fruit fly)).